The following is a 458-amino-acid chain: Cysteine--tRNA ligase (458 aa).

Cys29 contributes to the Zn(2+) binding site. The 'HIGH' region motif lies at 31–41 (PTVYDFLHIGN). Zn(2+) contacts are provided by Cys211, His236, and Glu240. The 'KMSKS' region motif lies at 269–273 (KMSKS). Lys272 serves as a coordination point for ATP.

Belongs to the class-I aminoacyl-tRNA synthetase family. In terms of assembly, monomer. It depends on Zn(2+) as a cofactor.

The protein localises to the cytoplasm. The catalysed reaction is tRNA(Cys) + L-cysteine + ATP = L-cysteinyl-tRNA(Cys) + AMP + diphosphate. The protein is Cysteine--tRNA ligase of Beijerinckia indica subsp. indica (strain ATCC 9039 / DSM 1715 / NCIMB 8712).